A 205-amino-acid polypeptide reads, in one-letter code: GTP cyclohydrolase-2 (205 aa).

49–53 (RIHSE) contacts GTP. Zn(2+)-binding residues include C54, C65, and C67. Residues Q70, 92–94 (EGR), and T114 each bind GTP. D126 (proton acceptor) is an active-site residue. Catalysis depends on R128, which acts as the Nucleophile. 2 residues coordinate GTP: T149 and K154.

Belongs to the GTP cyclohydrolase II family. Zn(2+) serves as cofactor.

The enzyme catalyses GTP + 4 H2O = 2,5-diamino-6-hydroxy-4-(5-phosphoribosylamino)-pyrimidine + formate + 2 phosphate + 3 H(+). Its pathway is cofactor biosynthesis; riboflavin biosynthesis; 5-amino-6-(D-ribitylamino)uracil from GTP: step 1/4. Its function is as follows. Catalyzes the conversion of GTP to 2,5-diamino-6-ribosylamino-4(3H)-pyrimidinone 5'-phosphate (DARP), formate and pyrophosphate. The polypeptide is GTP cyclohydrolase-2 (Shewanella amazonensis (strain ATCC BAA-1098 / SB2B)).